We begin with the raw amino-acid sequence, 693 residues long: DNA-directed RNA polymerase subunit beta' (693 aa).

The Zn(2+) site is built by cysteine 76, cysteine 78, cysteine 94, and cysteine 97. Residues aspartate 496, aspartate 498, and aspartate 500 each coordinate Mg(2+).

This sequence belongs to the RNA polymerase beta' chain family. RpoC1 subfamily. In terms of assembly, in plastids the minimal PEP RNA polymerase catalytic core is composed of four subunits: alpha, beta, beta', and beta''. When a (nuclear-encoded) sigma factor is associated with the core the holoenzyme is formed, which can initiate transcription. Mg(2+) is required as a cofactor. The cofactor is Zn(2+).

It is found in the plastid. The protein localises to the chloroplast. The catalysed reaction is RNA(n) + a ribonucleoside 5'-triphosphate = RNA(n+1) + diphosphate. Its function is as follows. DNA-dependent RNA polymerase catalyzes the transcription of DNA into RNA using the four ribonucleoside triphosphates as substrates. The chain is DNA-directed RNA polymerase subunit beta' from Nuphar advena (Common spatterdock).